A 95-amino-acid polypeptide reads, in one-letter code: Aspartyl/glutamyl-tRNA(Asn/Gln) amidotransferase subunit C (95 aa).

It belongs to the GatC family. As to quaternary structure, heterotrimer of A, B and C subunits.

The catalysed reaction is L-glutamyl-tRNA(Gln) + L-glutamine + ATP + H2O = L-glutaminyl-tRNA(Gln) + L-glutamate + ADP + phosphate + H(+). It catalyses the reaction L-aspartyl-tRNA(Asn) + L-glutamine + ATP + H2O = L-asparaginyl-tRNA(Asn) + L-glutamate + ADP + phosphate + 2 H(+). Its function is as follows. Allows the formation of correctly charged Asn-tRNA(Asn) or Gln-tRNA(Gln) through the transamidation of misacylated Asp-tRNA(Asn) or Glu-tRNA(Gln) in organisms which lack either or both of asparaginyl-tRNA or glutaminyl-tRNA synthetases. The reaction takes place in the presence of glutamine and ATP through an activated phospho-Asp-tRNA(Asn) or phospho-Glu-tRNA(Gln). In Rhodopseudomonas palustris (strain BisA53), this protein is Aspartyl/glutamyl-tRNA(Asn/Gln) amidotransferase subunit C.